The primary structure comprises 94 residues: Pyrimidine/purine nucleoside phosphorylase (94 aa).

It belongs to the nucleoside phosphorylase PpnP family.

The enzyme catalyses a purine D-ribonucleoside + phosphate = a purine nucleobase + alpha-D-ribose 1-phosphate. The catalysed reaction is adenosine + phosphate = alpha-D-ribose 1-phosphate + adenine. It catalyses the reaction cytidine + phosphate = cytosine + alpha-D-ribose 1-phosphate. It carries out the reaction guanosine + phosphate = alpha-D-ribose 1-phosphate + guanine. The enzyme catalyses inosine + phosphate = alpha-D-ribose 1-phosphate + hypoxanthine. The catalysed reaction is thymidine + phosphate = 2-deoxy-alpha-D-ribose 1-phosphate + thymine. It catalyses the reaction uridine + phosphate = alpha-D-ribose 1-phosphate + uracil. It carries out the reaction xanthosine + phosphate = alpha-D-ribose 1-phosphate + xanthine. Its function is as follows. Catalyzes the phosphorolysis of diverse nucleosides, yielding D-ribose 1-phosphate and the respective free bases. Can use uridine, adenosine, guanosine, cytidine, thymidine, inosine and xanthosine as substrates. Also catalyzes the reverse reactions. The chain is Pyrimidine/purine nucleoside phosphorylase from Citrobacter koseri (strain ATCC BAA-895 / CDC 4225-83 / SGSC4696).